Here is a 694-residue protein sequence, read N- to C-terminus: Transcription activator of gluconeogenesis PTRG_06536 (694 aa).

The disordered stretch occupies residues 1–57 (MTTPDAEDASPSPEYRSDQDDDMAAEQTTDRQSGDASPTQKPANGKPNAKDPLRPRR). The segment at residues 64–92 (CFACQRAHLTCGDERPCGRCIKRGLQDHC) is a DNA-binding region (zn(2)-C6 fungal-type). Disordered regions lie at residues 175–216 (FSNQ…FGPL), 289–369 (AMAF…GDNP), 384–420 (AQRS…RDTK), and 539–569 (VNLG…SEGA). Residues 193–204 (SVQNAGAPSTMS) show a composition bias toward polar residues. Positions 205 to 214 (QGQQGMQQFG) are enriched in low complexity. Over residues 302-324 (WQETQSRQGSMHVHTPNNTSGSG) the composition is skewed to polar residues. A compositionally biased stretch (low complexity) spans 349-363 (ATHSTASPASTDAST). The segment covering 392 to 408 (RPQQENRPPTTALQSIH) has biased composition (polar residues). The region spanning 485-559 (LQRHLMTLQE…SDTSTQNTTP (75 aa)) is the PAS domain.

Belongs to the ERT1/acuK family.

It is found in the nucleus. In terms of biological role, transcription factor which regulates nonfermentable carbon utilization. Activator of gluconeogenetic genes. This Pyrenophora tritici-repentis (strain Pt-1C-BFP) (Wheat tan spot fungus) protein is Transcription activator of gluconeogenesis PTRG_06536.